The following is a 105-amino-acid chain: Large ribosomal subunit protein bL21 (105 aa).

This sequence belongs to the bacterial ribosomal protein bL21 family. In terms of assembly, part of the 50S ribosomal subunit. Contacts protein L20.

Its function is as follows. This protein binds to 23S rRNA in the presence of protein L20. The polypeptide is Large ribosomal subunit protein bL21 (Rickettsia africae (strain ESF-5)).